We begin with the raw amino-acid sequence, 488 residues long: Proline--tRNA ligase (488 aa).

Belongs to the class-II aminoacyl-tRNA synthetase family. ProS type 3 subfamily. As to quaternary structure, homodimer.

The protein resides in the cytoplasm. It carries out the reaction tRNA(Pro) + L-proline + ATP = L-prolyl-tRNA(Pro) + AMP + diphosphate. In terms of biological role, catalyzes the attachment of proline to tRNA(Pro) in a two-step reaction: proline is first activated by ATP to form Pro-AMP and then transferred to the acceptor end of tRNA(Pro). The sequence is that of Proline--tRNA ligase from Pyrobaculum arsenaticum (strain DSM 13514 / JCM 11321 / PZ6).